The primary structure comprises 1191 residues: Rho GTPase-activating protein 20 (1191 aa).

Polar residues predominate over residues 1 to 23 (MEAMSPQQETLGGQPGRSSSLTG). Positions 1–45 (MEAMSPQQETLGGQPGRSSSLTGVSRLAGGSCTKKKMKTLAERRR) are disordered. Position 46 is a phosphoserine (Ser46). In terms of domain architecture, PH spans 78–180 (SLVCSNRTLL…EQKDKWLSLL (103 aa)). A Ras-associating domain is found at 194–295 (KSIPLKIFAK…TPFNLQEPFL (102 aa)). In terms of domain architecture, Rho-GAP spans 365–551 (ISLPNICEND…FLIENCLRIF (187 aa)). Residues Ser704 and Ser730 each carry the phosphoserine modification. Disordered stretches follow at residues 768 to 791 (SKKN…NHVK), 926 to 1014 (RLNL…SRPA), 1052 to 1123 (KKAK…RHCS), and 1140 to 1191 (HEEI…TKDI). A compositionally biased stretch (low complexity) spans 934–961 (SYSSLSSPGTSPSGSSVSSQDSAFSQIS). Composition is skewed to polar residues over residues 962 to 981 (EHSV…TFQA) and 1103 to 1116 (PVQS…SPFQ). Residues 1182 to 1191 (IEDRYLTKDI) are compositionally biased toward basic and acidic residues.

Expressed predominantly in the brain. Lower expression is found in lymph nodes.

Its function is as follows. GTPase activator for the Rho-type GTPases by converting them to an inactive GDP-bound state. The sequence is that of Rho GTPase-activating protein 20 (ARHGAP20) from Homo sapiens (Human).